Consider the following 450-residue polypeptide: Phosphoglucosamine mutase (450 aa).

Ser-104 (phosphoserine intermediate) is an active-site residue. Mg(2+) contacts are provided by Ser-104, Asp-243, Asp-245, and Asp-247. Ser-104 is modified (phosphoserine).

The protein belongs to the phosphohexose mutase family. Mg(2+) serves as cofactor. Activated by phosphorylation.

The catalysed reaction is alpha-D-glucosamine 1-phosphate = D-glucosamine 6-phosphate. In terms of biological role, catalyzes the conversion of glucosamine-6-phosphate to glucosamine-1-phosphate. The protein is Phosphoglucosamine mutase of Cutibacterium acnes (strain DSM 16379 / KPA171202) (Propionibacterium acnes).